The chain runs to 178 residues: Large ribosomal subunit protein uL5 (178 aa).

This sequence belongs to the universal ribosomal protein uL5 family. As to quaternary structure, part of the 50S ribosomal subunit; part of the 5S rRNA/L5/L18/L25 subcomplex. Contacts the 5S rRNA and the P site tRNA. Forms a bridge to the 30S subunit in the 70S ribosome.

In terms of biological role, this is one of the proteins that bind and probably mediate the attachment of the 5S RNA into the large ribosomal subunit, where it forms part of the central protuberance. In the 70S ribosome it contacts protein S13 of the 30S subunit (bridge B1b), connecting the 2 subunits; this bridge is implicated in subunit movement. Contacts the P site tRNA; the 5S rRNA and some of its associated proteins might help stabilize positioning of ribosome-bound tRNAs. In Prochlorococcus marinus (strain MIT 9515), this protein is Large ribosomal subunit protein uL5.